The sequence spans 603 residues: uncharacterized protein (603 aa).

In terms of domain architecture, Ubiquitin-like spans Tyr-4 to Phe-79. 3 disordered regions span residues Thr-85–Leu-121, Ser-159–Ser-178, and Ala-206–Phe-348. Composition is skewed to polar residues over residues Val-94–Asn-117 and Thr-162–Ser-178. Residues Ser-219 to Pro-231 show a composition bias toward low complexity. A compositionally biased stretch (polar residues) spans Leu-246 to Leu-264. Residues Ser-280–Ser-289 show a composition bias toward low complexity. Residues Ile-290–Gly-314 are compositionally biased toward polar residues. Residues Pro-315–Pro-329 show a composition bias toward low complexity. Positions Ala-330–Phe-348 are enriched in polar residues. Residues Ile-496–Phe-516 traverse the membrane as a helical segment. Positions Thr-544–Leu-578 are disordered. Thr-566 is subject to Phosphothreonine. A compositionally biased stretch (basic and acidic residues) spans Asn-569–Leu-578.

The protein resides in the endoplasmic reticulum membrane. This is an uncharacterized protein from Schizosaccharomyces pombe (strain 972 / ATCC 24843) (Fission yeast).